Reading from the N-terminus, the 51-residue chain is Large ribosomal subunit protein eL39 (51 aa).

It belongs to the eukaryotic ribosomal protein eL39 family.

This is Large ribosomal subunit protein eL39 from Thermococcus sibiricus (strain DSM 12597 / MM 739).